Here is a 472-residue protein sequence, read N- to C-terminus: POU domain, class 5, transcription factor 1 (472 aa).

Disordered regions lie at residues 127-154 and 187-255; these read MPSE…YHLT and ISQA…LTTE. Residues 220–234 show a composition bias toward polar residues; that stretch reads TAQNIPSAQAQSAPR. The span at 235-245 shows a compositional bias: low complexity; it reads SSGSSSGGCSN. Over residues 246-255 the composition is skewed to acidic residues; the sequence is SEEEETLTTE. The 75-residue stretch at 249 to 323 folds into the POU-specific domain; it reads EETLTTEDLE…LLQRWLNEAE (75 aa). Residues 343–402 constitute a DNA-binding region (homeobox); sequence KRKRRTSLEGTVRSALESYFVKCPKPNTLEITHISDDLGLERDVVRVWFCNRRQKGKRLA.

It belongs to the POU transcription factor family. Class-7 subfamily.

The protein resides in the nucleus. Involved in early development of embryos, especially in the process of gastrulation. May play an important role in establishing and specifying rhombomeric segments. Seems to be required to maintain the cells in a highly undifferentiated state. In contrast to POU2, T-POU2 lacks DNA-binding activity because of its incomplete pou domain structure. Overexpression of POU2 does not have any effect on development, whereas overexpression of t-POU2 causes developmental retardation or arrest before gastrulation. The polypeptide is POU domain, class 5, transcription factor 1 (pou5f1) (Danio rerio (Zebrafish)).